We begin with the raw amino-acid sequence, 464 residues long: 3-isopropylmalate dehydratase large subunit (464 aa).

The [4Fe-4S] cluster site is built by Cys-337, Cys-397, and Cys-400.

This sequence belongs to the aconitase/IPM isomerase family. LeuC type 1 subfamily. Heterodimer of LeuC and LeuD. Requires [4Fe-4S] cluster as cofactor.

It carries out the reaction (2R,3S)-3-isopropylmalate = (2S)-2-isopropylmalate. The protein operates within amino-acid biosynthesis; L-leucine biosynthesis; L-leucine from 3-methyl-2-oxobutanoate: step 2/4. Its function is as follows. Catalyzes the isomerization between 2-isopropylmalate and 3-isopropylmalate, via the formation of 2-isopropylmaleate. This is 3-isopropylmalate dehydratase large subunit from Bacillus cereus (strain ZK / E33L).